Here is a 529-residue protein sequence, read N- to C-terminus: Peptide chain release factor 3 (529 aa).

The 270-residue stretch at 11–280 (NSRRTFAIIS…AFINWAPEPK (270 aa)) folds into the tr-type G domain. GTP is bound by residues 20 to 27 (SHPDAGKT), 88 to 92 (DTPGH), and 142 to 145 (NKMD).

It belongs to the TRAFAC class translation factor GTPase superfamily. Classic translation factor GTPase family. PrfC subfamily.

The protein resides in the cytoplasm. Its function is as follows. Increases the formation of ribosomal termination complexes and stimulates activities of RF-1 and RF-2. It binds guanine nucleotides and has strong preference for UGA stop codons. It may interact directly with the ribosome. The stimulation of RF-1 and RF-2 is significantly reduced by GTP and GDP, but not by GMP. The protein is Peptide chain release factor 3 of Acinetobacter baylyi (strain ATCC 33305 / BD413 / ADP1).